The sequence spans 269 residues: Formamidopyrimidine-DNA glycosylase (269 aa).

Pro-2 serves as the catalytic Schiff-base intermediate with DNA. Glu-3 (proton donor) is an active-site residue. The Proton donor; for beta-elimination activity role is filled by Lys-57. The DNA site is built by His-90, Arg-109, and Lys-150. The FPG-type zinc finger occupies 235 to 269 (QVYGRKGEPCRVCGTPIVATKHAQRATFYCRQCQK). Arg-259 functions as the Proton donor; for delta-elimination activity in the catalytic mechanism.

This sequence belongs to the FPG family. Monomer. Zn(2+) serves as cofactor.

The catalysed reaction is Hydrolysis of DNA containing ring-opened 7-methylguanine residues, releasing 2,6-diamino-4-hydroxy-5-(N-methyl)formamidopyrimidine.. The enzyme catalyses 2'-deoxyribonucleotide-(2'-deoxyribose 5'-phosphate)-2'-deoxyribonucleotide-DNA = a 3'-end 2'-deoxyribonucleotide-(2,3-dehydro-2,3-deoxyribose 5'-phosphate)-DNA + a 5'-end 5'-phospho-2'-deoxyribonucleoside-DNA + H(+). Functionally, involved in base excision repair of DNA damaged by oxidation or by mutagenic agents. Acts as a DNA glycosylase that recognizes and removes damaged bases. Has a preference for oxidized purines, such as 7,8-dihydro-8-oxoguanine (8-oxoG). Has AP (apurinic/apyrimidinic) lyase activity and introduces nicks in the DNA strand. Cleaves the DNA backbone by beta-delta elimination to generate a single-strand break at the site of the removed base with both 3'- and 5'-phosphates. This is Formamidopyrimidine-DNA glycosylase from Escherichia coli (strain K12 / MC4100 / BW2952).